A 230-amino-acid chain; its full sequence is 7-cyano-7-deazaguanine synthase (230 aa).

8 to 18 (FSGGQDSTTCL) is an ATP binding site. Cysteine 187, cysteine 196, cysteine 199, and cysteine 202 together coordinate Zn(2+).

This sequence belongs to the QueC family. Requires Zn(2+) as cofactor.

The catalysed reaction is 7-carboxy-7-deazaguanine + NH4(+) + ATP = 7-cyano-7-deazaguanine + ADP + phosphate + H2O + H(+). It participates in purine metabolism; 7-cyano-7-deazaguanine biosynthesis. In terms of biological role, catalyzes the ATP-dependent conversion of 7-carboxy-7-deazaguanine (CDG) to 7-cyano-7-deazaguanine (preQ(0)). This is 7-cyano-7-deazaguanine synthase from Shewanella amazonensis (strain ATCC BAA-1098 / SB2B).